We begin with the raw amino-acid sequence, 94 residues long: Aspartyl/glutamyl-tRNA(Asn/Gln) amidotransferase subunit C (94 aa).

Belongs to the GatC family. As to quaternary structure, heterotrimer of A, B and C subunits.

It catalyses the reaction L-glutamyl-tRNA(Gln) + L-glutamine + ATP + H2O = L-glutaminyl-tRNA(Gln) + L-glutamate + ADP + phosphate + H(+). The catalysed reaction is L-aspartyl-tRNA(Asn) + L-glutamine + ATP + H2O = L-asparaginyl-tRNA(Asn) + L-glutamate + ADP + phosphate + 2 H(+). Functionally, allows the formation of correctly charged Asn-tRNA(Asn) or Gln-tRNA(Gln) through the transamidation of misacylated Asp-tRNA(Asn) or Glu-tRNA(Gln) in organisms which lack either or both of asparaginyl-tRNA or glutaminyl-tRNA synthetases. The reaction takes place in the presence of glutamine and ATP through an activated phospho-Asp-tRNA(Asn) or phospho-Glu-tRNA(Gln). The sequence is that of Aspartyl/glutamyl-tRNA(Asn/Gln) amidotransferase subunit C from Carboxydothermus hydrogenoformans (strain ATCC BAA-161 / DSM 6008 / Z-2901).